The following is a 303-amino-acid chain: Taste receptor type 2 member 13 (303 aa).

Residues 1 to 7 (MESALPS) lie on the Extracellular side of the membrane. The helical transmembrane segment at 8–28 (IFTLVIIAEFIIGNLSNGFIV) threads the bilayer. At 29 to 55 (LINCIDWVSKRELSSVDKLLIILAISR) the chain is on the cytoplasmic side. Residues 56–76 (IGLIWEILVSWFLALHYLAIF) traverse the membrane as a helical segment. The Extracellular portion of the chain corresponds to 77–85 (VSGTGLRIM). Residues 86–106 (IFSWIVSNHFNLWLATIFSIF) form a helical membrane-spanning segment. Residues 107-128 (YLLKIASFSSPAFLYLKWRVNK) are Cytoplasmic-facing. Residues 129–149 (VILMILLGTLVFLFLNLIQIN) form a helical membrane-spanning segment. The Extracellular portion of the chain corresponds to 150–184 (MHIKDWLDRYERNTTWNFSMSDFETFSVSVKFTMT). Asparagine 162 and asparagine 166 each carry an N-linked (GlcNAc...) asparagine glycan. Residues 185 to 205 (MFSLTPFTVAFISFLLLIFSL) traverse the membrane as a helical segment. The Cytoplasmic segment spans residues 206-232 (QKHLQKMQLNYKGHRDPRTKVHTNALK). The chain crosses the membrane as a helical span at residues 233–253 (IVISFLLFYASFFLCVLISWI). The Extracellular portion of the chain corresponds to 254 to 261 (SELYQNTV). The chain crosses the membrane as a helical span at residues 262 to 282 (IYMLCETIGVFSPSSHSFLLI). Residues 283–303 (LGNAKLRQAFLLVAAKVWAKR) are Cytoplasmic-facing.

Belongs to the G-protein coupled receptor T2R family. As to expression, expressed in subsets of taste receptor cells of the tongue and palate epithelium and exclusively in gustducin-positive cells.

It localises to the membrane. Its function is as follows. Receptor that may play a role in the perception of bitterness and is gustducin-linked. May play a role in sensing the chemical composition of the gastrointestinal content. The activity of this receptor may stimulate alpha gustducin, mediate PLC-beta-2 activation and lead to the gating of TRPM5. In Homo sapiens (Human), this protein is Taste receptor type 2 member 13 (TAS2R13).